Reading from the N-terminus, the 714-residue chain is 2'-5'-oligoadenylate synthase 2 (714 aa).

The N-myristoyl glycine moiety is linked to residue G2. OAS domain stretches follow at residues 11–336 (KPSE…SWNV) and 344–683 (TPGH…WNVP). S397 contributes to the ATP binding site. The Mg(2+) site is built by D409 and D480. Residues R544 and K547 each contribute to the ATP site.

The protein belongs to the 2-5A synthase family. As to quaternary structure, homodimer. It depends on Mg(2+) as a cofactor. In terms of processing, myristoylation is not essential for its activity. Post-translationally, glycosylated. Glycosylation is essential for its activity.

The protein resides in the cytoplasm. It localises to the perinuclear region. The catalysed reaction is 3 ATP = 5'-triphosphoadenylyl-(2'-&gt;5')-adenylyl-(2'-&gt;5')-adenosine + 2 diphosphate. Its activity is regulated as follows. Produced as a latent enzyme which is activated by double stranded RNA (dsRNA) generated during the course of viral infection. The dsRNA activator must be at least 15 nucleotides long, and no modification of the 2'-hydroxyl group is tolerated. ssRNA or dsDNA do not act as activators. Strongly inhibited by copper, iron and zinc ions. Partially inhibited by cobalt and nickel ions. In terms of biological role, interferon-induced, dsRNA-activated antiviral enzyme which plays a critical role in cellular innate antiviral response. Activated by detection of double stranded RNA (dsRNA): polymerizes higher oligomers of 2'-5'-oligoadenylates (2-5A) from ATP which then bind to the inactive monomeric form of ribonuclease L (RNASEL) leading to its dimerization and subsequent activation. Activation of RNASEL leads to degradation of cellular as well as viral RNA, resulting in the inhibition of protein synthesis, thus terminating viral replication. Can mediate the antiviral effect via the classical RNASEL-dependent pathway or an alternative antiviral pathway independent of RNASEL. In addition, it may also play a role in other cellular processes such as apoptosis, cell growth, differentiation and gene regulation. May act as a negative regulator of lactation, stopping lactation in virally infected mammary gland lobules, thereby preventing transmission of viruses to neonates. Non-infected lobules would not be affected, allowing efficient pup feeding during infection. The sequence is that of 2'-5'-oligoadenylate synthase 2 (OAS2) from Bos taurus (Bovine).